A 702-amino-acid chain; its full sequence is Elongation factor G (702 aa).

Residues 8–290 enclose the tr-type G domain; it reads SRYRNIGISA…AIIEFLPAPN (283 aa). GTP contacts are provided by residues 17–24, 88–92, and 142–145; these read AHIDAGKT, DTPGH, and NKMD.

Belongs to the TRAFAC class translation factor GTPase superfamily. Classic translation factor GTPase family. EF-G/EF-2 subfamily.

The protein resides in the cytoplasm. Functionally, catalyzes the GTP-dependent ribosomal translocation step during translation elongation. During this step, the ribosome changes from the pre-translocational (PRE) to the post-translocational (POST) state as the newly formed A-site-bound peptidyl-tRNA and P-site-bound deacylated tRNA move to the P and E sites, respectively. Catalyzes the coordinated movement of the two tRNA molecules, the mRNA and conformational changes in the ribosome. This chain is Elongation factor G, found in Buchnera aphidicola subsp. Acyrthosiphon pisum (strain 5A).